A 194-amino-acid polypeptide reads, in one-letter code: Ribosome maturation factor RimM (194 aa).

One can recognise a PRC barrel domain in the interval 92–190; that stretch reads DDGYYDHELI…ALVVTPPEGL (99 aa).

This sequence belongs to the RimM family. Binds ribosomal protein uS19.

The protein localises to the cytoplasm. Functionally, an accessory protein needed during the final step in the assembly of 30S ribosomal subunit, possibly for assembly of the head region. Essential for efficient processing of 16S rRNA. May be needed both before and after RbfA during the maturation of 16S rRNA. It has affinity for free ribosomal 30S subunits but not for 70S ribosomes. The protein is Ribosome maturation factor RimM of Corynebacterium urealyticum (strain ATCC 43042 / DSM 7109).